Here is a 558-residue protein sequence, read N- to C-terminus: Acylase ACY 1 proenzyme (558 aa).

Threonine 368 acts as the Nucleophile in catalysis.

This sequence belongs to the gamma-glutamyltransferase family. Dimer of two non-identical chains processed from the same precursor.

It carries out the reaction (7R)-7-(4-carboxybutanamido)cephalosporanate + H2O = (7R)-7-aminocephalosporanate + glutarate. The enzyme catalyses an N-terminal (5-L-glutamyl)-[peptide] + an alpha-amino acid = 5-L-glutamyl amino acid + an N-terminal L-alpha-aminoacyl-[peptide]. The catalysed reaction is glutathione + H2O = L-cysteinylglycine + L-glutamate. It catalyses the reaction an S-substituted glutathione + H2O = an S-substituted L-cysteinylglycine + L-glutamate. In terms of biological role, besides the cephalosporin acylase I activity which converts GL-7ACA into 7-ACA; this enzyme displays some gamma glutamyltranspeptidase activity. The sequence is that of Acylase ACY 1 proenzyme (acyI) from Pseudomonas sp. (strain V22).